We begin with the raw amino-acid sequence, 423 residues long: MFS-type transporter phiL (423 aa).

3 consecutive transmembrane segments (helical) span residues 25 to 45 (IFCF…NSFI), 82 to 102 (IGLA…LGGV), and 111 to 131 (YIFV…IIFF). N-linked (GlcNAc...) asparagine glycosylation is found at N141 and N151. Residues 166-185 (DHASGRNLPNAGSKKSNPRN) are disordered. The next 4 helical transmembrane spans lie at 203–223 (VIIF…SLSY), 238–258 (LSYI…GFVV), 298–318 (IAVP…WTMS), and 321–341 (LPPI…TAAY). N352 is a glycosylation site (N-linked (GlcNAc...) asparagine). Transmembrane regions (helical) follow at residues 369 to 389 (LLGA…GMGW) and 390 to 410 (TFTA…FLLF).

The protein belongs to the major facilitator superfamily. CAR1 family.

It is found in the membrane. In terms of biological role, MFS-type transporter; part of the gene cluster that mediates the biosynthesis of the antihypercholesterolemic agents phomoidrides which are dimeric anhydrides. The polypeptide is MFS-type transporter phiL (Fungal sp. (strain ATCC 74256)).